The chain runs to 261 residues: MQLEFHQVDAFSSRPFSGNPAVVYRLDAWLADELMQMIATEHNLSETAFVVREGEAWRIRWFTPSVEVALCGHATLAAAHVLFEVYDEPGERLEFISRSGALRVNREDERLVLDFPAQYPSEVGSTVELEQALGLPPVDVLGSTDKLLVLLESEEAVRACRPDFAALARLPWRGVIVTARGLQKDFVSRFFAPAMGVDEDPVTGSAHCSLIPYWAQRLNKLSLTAQQCSARGGELWCRLEGERVSIAGHAVLVASGRIRLS.

Glu-46 is a catalytic residue.

It belongs to the PhzF family.

This is an uncharacterized protein from Pseudomonas aeruginosa (strain ATCC 15692 / DSM 22644 / CIP 104116 / JCM 14847 / LMG 12228 / 1C / PRS 101 / PAO1).